The chain runs to 217 residues: T-complex protein 10A homolog 1 (217 aa).

Residues 1-26 (MLAGQLEARDPKEGTHPEDPCPGAGA) form a disordered region. Over residues 7-19 (EARDPKEGTHPED) the composition is skewed to basic and acidic residues. Positions 69-110 (ADVHGKLRSHIDALREQNMELREKLRALQLQRWKARKKSAAS) form a coiled coil. The interval 75–96 (LRSHIDALREQNMELREKLRAL) is leucine-zipper. Over residues 175 to 192 (ERISSWKTPPQEKRDKSL) the composition is skewed to basic and acidic residues. Residues 175–217 (ERISSWKTPPQEKRDKSLSRRRQDRRATPTGRPTPCAERRGGV) are disordered.

This sequence belongs to the TCP10 family. As to quaternary structure, self-associates (via leucine zipper). Interacts (via leucine zipper) with ZIPK/DAPK3 (via leucine zipper). Interacts with MAD4.

The protein localises to the nucleus. Its function is as follows. May be involved in transcriptional regulation. Has in vitro transcription inhibition activity. In Pan troglodytes (Chimpanzee), this protein is T-complex protein 10A homolog 1 (TCP10L).